The chain runs to 1189 residues: Pumilio homolog 1 (1189 aa).

Ser2 is subject to N-acetylserine. The residue at position 19 (Ser19) is a Phosphoserine. The disordered stretch occupies residues 22-73 (LKHHPQEPANPNMPVVLTSGTGSQAQPQPAANQALAAGTHSSPVPGSIGVAG). Positions 45 to 58 (QAQPQPAANQALAA) are enriched in low complexity. Residues Ser75, Ser98, and Ser106 each carry the phosphoserine modification. A Phosphothreonine modification is found at Thr112. Residues Ser124, Ser159, Ser197, Ser209, and Ser229 each carry the phosphoserine modification. Positions 233–272 (SCLRKGGFGPRDADSDENDKGEKKNKGTFDGDKLGDLKEE) are disordered. The segment covering 250-272 (NDKGEKKNKGTFDGDKLGDLKEE) has biased composition (basic and acidic residues). A Phosphoserine modification is found at Ser305. The segment covering 491–503 (QQSAPQAQQGQQQ) has biased composition (low complexity). Disordered regions lie at residues 491 to 525 (QQSAPQAQQGQQQVLRGGASQRPLTPNQNQQGQQT) and 614 to 647 (AGTTNGPFRPLGTQQPQPQPQQQPSNNLASSSFY). Over residues 512-525 (RPLTPNQNQQGQQT) the composition is skewed to polar residues. The residue at position 515 (Thr515) is a Phosphothreonine. Over residues 627 to 647 (QQPQPQPQQQPSNNLASSSFY) the composition is skewed to low complexity. Phosphoserine is present on residues Ser710 and Ser715. The interval 743–773 (GPVGMPLPSQGPGHSQTPPPSLSSHGSSSSL) is disordered. Residues 764 to 773 (LSSHGSSSSL) are compositionally biased toward low complexity. Arg797 is subject to Omega-N-methylarginine. 2 positions are modified to phosphoserine: Ser807 and Ser823. The region spanning 829 to 1171 (GRSRLLEDFR…HILAKLEKYY (343 aa)) is the PUM-HD domain. Pumilio repeat units follow at residues 849–884 (EIAGHIMEFSQDQHGSRFIQLKLERATAAERQLVFN), 885–920 (EILQAAYQLMVDVFGNYVIQKFFEFGSHEQKLALAE), 921–958 (RIRGHVLSLALQMYGCRVIQKALEFIPSDQQVINEMVR), 959–994 (ELDGHVLKCVKDQNGNHVVQKCIECVQPQSLQFIID), 995–1030 (AFKGQVFALSTHPYGCRVIQRILEHCLPDQTLPILE), 1031–1066 (ELHQHTEQLVQDQYGNYVIQHVLEHGRPEDKSKIVA), 1067–1102 (EIRGNVLVLSQHKFASNVVEKCVTHASRTERAVLID), and 1106–1145 (TMNDGPHSALYTMMKDQYANYVVQKMIDVAEPGQRKIVMH). The tract at residues 864 to 868 (SRFIQ) is adenine-nucleotide binding in RNA target. The uracil-nucleotide binding in RNA target stretch occupies residues 900–904 (NYVIQ). The tract at residues 936 to 940 (CRVIQ) is adenine-nucleotide binding in RNA target. Residues 974-978 (NHVVQ) form a non-specific-nucleotide binding in RNA target region. The adenine-nucleotide binding in RNA target stretch occupies residues 1010 to 1014 (CRVIQ). The uracil-nucleotide binding in RNA target stretch occupies residues 1046-1050 (NYVIQ). Guanine-nucleotide binding in RNA target stretches follow at residues 1082–1086 (SNVVE) and 1083–1086 (NVVE). A uracil-nucleotide binding in RNA target region spans residues 1125–1129 (NYVVQ).

As to quaternary structure, recruits the CCR4-POP2-NOT deadenylase leading to translational inhibition and mRNA degradation. Interacts with TRIM71 (via NHL repeats) in an RNA-dependent manner. Phosphorylation at Ser-715 promotes RNA-binding activity. Following growth factor stimulation phosphorylated at Ser-715, promoting binding to the 3'-UTR of CDKN1B/p27 mRNA. Widely expressed. Expressed in brain, heart, kidney, liver, lung, skin, intestine, spleen, testis and thymus. Weakly or not expressed in muscles and stomach. Expressed at various stages of myeloid and lymphoid cell development. Highly expressed in testis. Expressed in all major brain regions (at protein level).

Its subcellular location is the cytoplasm. The protein resides in the P-body. It is found in the cytoplasmic granule. Sequence-specific RNA-binding protein that acts as a post-transcriptional repressor by binding the 3'-UTR of mRNA targets. Binds to an RNA consensus sequence, the Pumilio Response Element (PRE), 5'-UGUANAUA-3', that is related to the Nanos Response Element (NRE). Mediates post-transcriptional repression of transcripts via different mechanisms: acts via direct recruitment of the CCR4-POP2-NOT deadenylase leading to translational inhibition and mRNA degradation. Also mediates deadenylation-independent repression by promoting accessibility of miRNAs. Following growth factor stimulation, phosphorylated and binds to the 3'-UTR of CDKN1B/p27 mRNA, inducing a local conformational change that exposes miRNA-binding sites, promoting association of miR-221 and miR-222, efficient suppression of CDKN1B/p27 expression, and rapid entry to the cell cycle. Acts as a post-transcriptional repressor of E2F3 mRNAs by binding to its 3'-UTR and facilitating miRNA regulation. Represses a program of genes necessary to maintain genomic stability such as key mitotic, DNA repair and DNA replication factors. Its ability to repress those target mRNAs is regulated by the lncRNA NORAD (non-coding RNA activated by DNA damage) which, due to its high abundance and multitude of PUMILIO binding sites, is able to sequester a significant fraction of PUM1 and PUM2 in the cytoplasm. Involved in neuronal functions by regulating ATXN1 mRNA levels: acts by binding to the 3'-UTR of ATXN1 transcripts, leading to their down-regulation independently of the miRNA machinery. In testis, acts as a post-transcriptional regulator of spermatogenesis by binding to the 3'-UTR of mRNAs coding for regulators of p53/TP53. Involved in embryonic stem cell renewal by facilitating the exit from the ground state: acts by targeting mRNAs coding for naive pluripotency transcription factors and accelerates their down-regulation at the onset of differentiation. Binds specifically to miRNA MIR199A precursor, with PUM2, regulates miRNA MIR199A expression at a postranscriptional level. The polypeptide is Pumilio homolog 1 (Mus musculus (Mouse)).